The sequence spans 188 residues: UPF0340 protein GK3370 (188 aa).

It belongs to the UPF0340 family.

This is UPF0340 protein GK3370 from Geobacillus kaustophilus (strain HTA426).